A 636-amino-acid polypeptide reads, in one-letter code: DNA primase (636 aa).

Residues 44–68 (CPFHDEKTPSFHVRPNHGHFHCFGC) form a CHC2-type zinc finger. Residues 266–352 (HQAVVVEGYT…SGQSFVAVAA (87 aa)) enclose the Toprim domain. Mg(2+) contacts are provided by Glu272, Asp323, and Asp325. Over residues 443-459 (REEAKGGGRKDNNRRGQ) the composition is skewed to basic and acidic residues. The disordered stretch occupies residues 443–481 (REEAKGGGRKDNNRRGQETAARPKPPPVQRPDPTDPTLW).

It belongs to the DnaG primase family. Monomer. Interacts with DnaB. Zn(2+) serves as cofactor. Requires Mg(2+) as cofactor.

The enzyme catalyses ssDNA + n NTP = ssDNA/pppN(pN)n-1 hybrid + (n-1) diphosphate.. RNA polymerase that catalyzes the synthesis of short RNA molecules used as primers for DNA polymerase during DNA replication. This Mycolicibacterium smegmatis (strain ATCC 700084 / mc(2)155) (Mycobacterium smegmatis) protein is DNA primase.